The following is a 170-amino-acid chain: Adenine phosphoribosyltransferase (170 aa).

It belongs to the purine/pyrimidine phosphoribosyltransferase family. In terms of assembly, homodimer.

The protein localises to the cytoplasm. The enzyme catalyses AMP + diphosphate = 5-phospho-alpha-D-ribose 1-diphosphate + adenine. The protein operates within purine metabolism; AMP biosynthesis via salvage pathway; AMP from adenine: step 1/1. Its function is as follows. Catalyzes a salvage reaction resulting in the formation of AMP, that is energically less costly than de novo synthesis. The sequence is that of Adenine phosphoribosyltransferase from Streptococcus suis (strain 98HAH33).